Reading from the N-terminus, the 84-residue chain is Protein Ac76 (84 aa).

Interacts with protein Ac75.

The protein resides in the host cytoplasm. The protein localises to the host nucleus. Functionally, plays an essential role in budded virion (BV) and occluded derived virion (ODV) development. Participates in intranuclear microvesicle formation, ODV envelopment, and subsequent embedding of virions into occlusion bodies. The protein is Protein Ac76 (Ac76) of Lepidoptera (butterflies and moths).